The chain runs to 220 residues: 3-dehydroquinate dehydratase (220 aa).

3-dehydroquinate is bound by residues 29–31 (EFR) and Arg-56. Residue His-116 is the Proton donor/acceptor of the active site. Residue Lys-142 is the Schiff-base intermediate with substrate of the active site. 3-dehydroquinate is bound by residues Arg-180, Ser-200, and Gln-204.

The protein belongs to the type-I 3-dehydroquinase family. As to quaternary structure, homodimer.

It catalyses the reaction 3-dehydroquinate = 3-dehydroshikimate + H2O. It participates in metabolic intermediate biosynthesis; chorismate biosynthesis; chorismate from D-erythrose 4-phosphate and phosphoenolpyruvate: step 3/7. In terms of biological role, involved in the third step of the chorismate pathway, which leads to the biosynthesis of aromatic amino acids. Catalyzes the cis-dehydration of 3-dehydroquinate (DHQ) and introduces the first double bond of the aromatic ring to yield 3-dehydroshikimate. This chain is 3-dehydroquinate dehydratase, found in Methanocaldococcus jannaschii (strain ATCC 43067 / DSM 2661 / JAL-1 / JCM 10045 / NBRC 100440) (Methanococcus jannaschii).